A 354-amino-acid chain; its full sequence is DNA integrity scanning protein DisA (354 aa).

One can recognise a DAC domain in the interval 6-144 (EKELKSILKL…GHIKYVLRDS (139 aa)). ATP contacts are provided by residues Gly-73, Leu-91, and 104–108 (TRHRT).

It belongs to the DisA family. In terms of assembly, homooctamer. Mg(2+) serves as cofactor.

It catalyses the reaction 2 ATP = 3',3'-c-di-AMP + 2 diphosphate. Participates in a DNA-damage check-point that is active prior to asymmetric division when DNA is damaged. DisA forms globular foci that rapidly scan along the chromosomes during sporulation, searching for lesions. When a lesion is present, DisA pauses at the lesion site. This triggers a cellular response that culminates in a temporary block in sporulation initiation. Its function is as follows. Also has diadenylate cyclase activity, catalyzing the condensation of 2 ATP molecules into cyclic di-AMP (c-di-AMP). c-di-AMP acts as a signaling molecule that couples DNA integrity with progression of sporulation. The rise in c-di-AMP level generated by DisA while scanning the chromosome, operates as a positive signal that advances sporulation; upon encountering a lesion, the DisA focus arrests at the damaged site and halts c-di-AMP synthesis. This Clostridium kluyveri (strain ATCC 8527 / DSM 555 / NBRC 12016 / NCIMB 10680 / K1) protein is DNA integrity scanning protein DisA.